Reading from the N-terminus, the 372-residue chain is DNA replication and repair protein RecF (372 aa).

Residue 30-37 (GDNGQGKT) participates in ATP binding.

This sequence belongs to the RecF family.

The protein localises to the cytoplasm. In terms of biological role, the RecF protein is involved in DNA metabolism; it is required for DNA replication and normal SOS inducibility. RecF binds preferentially to single-stranded, linear DNA. It also seems to bind ATP. The chain is DNA replication and repair protein RecF from Ruminiclostridium cellulolyticum (strain ATCC 35319 / DSM 5812 / JCM 6584 / H10) (Clostridium cellulolyticum).